The sequence spans 114 residues: Flagellar hook-basal body complex protein FliE (114 aa).

The protein belongs to the FliE family.

The protein resides in the bacterial flagellum basal body. The chain is Flagellar hook-basal body complex protein FliE from Burkholderia multivorans (strain ATCC 17616 / 249).